Consider the following 30-residue polypeptide: Snake venom serine protease (30 aa).

One can recognise a Peptidase S1 domain in the interval 1-30 (VIGGDECNINEHRFLVALYDPDGFLSGGIL).

This sequence belongs to the peptidase S1 family. Snake venom subfamily. As to quaternary structure, monomer. N-Glycosylated. Expressed by the venom gland.

It is found in the secreted. With respect to regulation, inhibited by diisopropylfluorophosphate (DFP). Functionally, snake venom serine protease that catalyzes the hydrolysis of arginine esters, kallikrein substrates Pro-Phe-Arg-MCA and Z-Phe-Arg-MCA. Cleaves kininogen analogs to release bradykinin. Induces contraction of the isolated rat uterus directly at high concentrations, but provokes more forceful contractions when injected in presence of bovine plasma. Shows capillary permeability-increasing activity and hypotensive activity on the anesthetized rat. The protein is Snake venom serine protease of Crotalus viridis viridis (Prairie rattlesnake).